The following is a 75-amino-acid chain: Protein BsdD (75 aa).

In terms of biological role, involved in the non-oxidative decarboxylation and detoxification of phenolic derivatives under both aerobic and anaerobic conditions, however the precise biochemical function of BsdD in metabolism of phenolic acid is unknown. The chain is Protein BsdD from Bacillus subtilis (strain 168).